The sequence spans 251 residues: MSLPATFDLTPEDAQLLLAANTHLGARNVQVHQEPYVFNARPDGVHVINVGKTWEKLVLAARIIAAIPNPEDVVAISSRTYGQRAVLKFAAHTGATPIAGRFTPGSFTNYITRSFKEPRLVIVTDPRSDAQAIKEASYVNIPVIALTDLDSPSEYVDVAIPCNNRGKHSIGLIWYLLAREVLRLRGALTDRTQPWSIMPDLYFYRNPEEIEQQTAEEAAQEAGEEEAKEEVTEEQTEAAEWAQENADNVEW.

An N-acetylserine modification is found at Ser2. A disordered region spans residues 209–251 (EIEQQTAEEAAQEAGEEEAKEEVTEEQTEAAEWAQENADNVEW). Acidic residues predominate over residues 218–237 (AAQEAGEEEAKEEVTEEQTE). The segment covering 238 to 251 (AAEWAQENADNVEW) has biased composition (low complexity).

The protein belongs to the universal ribosomal protein uS2 family. In terms of assembly, component of the small ribosomal subunit. Mature ribosomes consist of a small (40S) and a large (60S) subunit. The 40S subunit contains about 33 different proteins and 1 molecule of RNA (18S). The 60S subunit contains about 49 different proteins and 3 molecules of RNA (25S, 5.8S and 5S). Interacts with RPS21.

The protein resides in the cytoplasm. Required for the assembly and/or stability of the 40S ribosomal subunit. Required for the processing of the 20S rRNA-precursor to mature 18S rRNA in a late step of the maturation of 40S ribosomal subunits. The chain is Small ribosomal subunit protein uS2 from Candida glabrata (strain ATCC 2001 / BCRC 20586 / JCM 3761 / NBRC 0622 / NRRL Y-65 / CBS 138) (Yeast).